A 682-amino-acid chain; its full sequence is MSTRLTTLSHTSEGHRVSVHYGYDDKGRLTGERQTVENPETGELLWHHETGHAYNEQGLANRVTPDSLPPVEWLTYGSGYLAGMKLGGTPLLEFTRDRLHRETVRSFGSMAGSNAAYKLTSTYTPAGQLQSQHLNSLVYDRDYGWNDNGDLVRISGPRQTREYGYSATGRLESVRTLAPDLDIRIPYATDPAGNRLPDPELHPDSTLTVWPDNRIAEDAHYVYRHDEYGRLTEKTDRIPAGVIRTDDERTHHYHYDSQHRLVFYTRIQHGEPLVESRYLYDPLGRRMAKRVWRRERDLTGWMSLSRKPEVTWYGWDGDRLTTVQTDTTRIQTVYEPGSFTPLIRVETENGEREKAQRRSLAETLQQEGSENGHGVVFPAELVRLLDRLEEEIRADRVSSESRAWLAQCGLTVEQLARQVEPEYTPARKVHFYHCDHRGLPLALISEDGNTAWRGEYDEWGNQLNEENPHHLHQPYRLPGQQHDEESGLYYNRHRHYDPLQGRYITPDPIGLRGGWNMYQYPLNPIQVIDPMGLDAIENMTSGGLIYAVSGVPGLIAANSITNSAYQFGYDMDAIVGGAHNGAADAMRHCYLMCRMTKTFGSTIADVIGKNHEAAGDRQGQPAKERIMDLKNNTVGIACGDFSAKCSDACIEKYNTGQLFGLDGIKADNPIKAKQGSSDASNY.

A compositionally biased stretch (basic and acidic residues) spans 348–360; it reads ENGEREKAQRRSL. The interval 348–372 is disordered; the sequence is ENGEREKAQRRSLAETLQQEGSENG.

Belongs to the RHS family.

Its function is as follows. Rhs elements have a nonessential function. They may play an important role in the natural ecology of the cell. This Escherichia coli (strain K12) protein is Putative protein RhsE (rhsE).